The chain runs to 308 residues: tRNA pseudouridine synthase B (308 aa).

Aspartate 48 acts as the Nucleophile in catalysis.

This sequence belongs to the pseudouridine synthase TruB family. Type 1 subfamily.

It catalyses the reaction uridine(55) in tRNA = pseudouridine(55) in tRNA. Responsible for synthesis of pseudouridine from uracil-55 in the psi GC loop of transfer RNAs. The chain is tRNA pseudouridine synthase B from Histophilus somni (strain 129Pt) (Haemophilus somnus).